The sequence spans 25 residues: Antithrombin-III (25 aa).

It belongs to the serpin family. As to quaternary structure, forms protease inhibiting heterodimer with TMPRSS7. In terms of processing, phosphorylated by FAM20C in the extracellular medium. As to expression, plasma.

The protein localises to the secreted. Its subcellular location is the extracellular space. In terms of biological role, most important serine protease inhibitor in plasma that regulates the blood coagulation cascade. AT-III inhibits thrombin, matriptase-3/TMPRSS7, as well as factors IXa, Xa and XIa. Its inhibitory activity is greatly enhanced in the presence of heparin. This chain is Antithrombin-III (SERPINC1), found in Mesocricetus auratus (Golden hamster).